Consider the following 129-residue polypeptide: M-zodatoxin-Lt8h (129 aa).

Residues 1–20 (MKYFVVALALVAAFACIAES) form the signal peptide. The propeptide occupies 21–60 (KPAESEHELAEVEEENELADLEDAVWLEDLADLSDLEETR).

This sequence belongs to the cationic peptide 06 (cytoinsectotoxin) family. As to expression, expressed by the venom gland.

It is found in the secreted. Functionally, insecticidal, cytolytic and antimicrobial peptide. Has insecticidal activity against the flesh fly S.carnaria. Has antibacterial activity against the Gram-negative bacteria E.coli. Forms voltage-dependent, ion-permeable channels in membranes. At high concentration causes cell membrane lysis. The polypeptide is M-zodatoxin-Lt8h (cit 1-11) (Lachesana tarabaevi (Spider)).